The chain runs to 284 residues: Four and a half LIM domains protein 5 (284 aa).

A C4-type zinc finger spans residues 8–32 (CQYCTASLLGKKYVLKDDSLFCVTC). LIM zinc-binding domains are found at residues 39-100 (NYCE…ECSS), 101-160 (KCFH…KEFA), 161-220 (HYCN…LYAN), and 223-283 (VACS…MDSD).

In terms of assembly, interacts with CREM (via the third LIM domain). Interacts (via second LIM domain) with SPAG8.

Its subcellular location is the nucleus. Its function is as follows. May be involved in the regulation of spermatogenesis. Stimulates CREM transcriptional activity in a phosphorylation-independent manner. This Macaca fascicularis (Crab-eating macaque) protein is Four and a half LIM domains protein 5 (FHL5).